The chain runs to 287 residues: Putative sugar uptake protein LJ_0170 (287 aa).

A run of 10 helical transmembrane segments spans residues 4–23 (VYLF…IASV), 28–50 (VYNQ…MAIM), 56–78 (WSLF…GQYI), 91–108 (ISTG…VLAF), 118–137 (LYGF…TSFT), 150–169 (VSTI…SSSI), 179–198 (SIFF…YTLV), 211–230 (VQSG…YILS), 240–259 (FVIS…IFLH), and 266–285 (GLIF…MLTT).

Belongs to the GRP transporter (TC 2.A.7.5) family.

The protein resides in the cell membrane. This is Putative sugar uptake protein LJ_0170 from Lactobacillus johnsonii (strain CNCM I-12250 / La1 / NCC 533).